Reading from the N-terminus, the 67-residue chain is Lantibiotic Flvbeta.b (67 aa).

The propeptide at 1-34 (MDNNTKLQKLYEQLAATGSEKELDAMLDENMAGA) is cleaved by FlvT. 2,3-didehydroalanine (Ser); by FlvM2 is present on serine 36. 2,3-didehydrobutyrine; by FlvM2 occurs at positions 39 and 43. Cross-links (beta-methyllanthionine (Thr-Cys); by FlvM2) lie at residues 50–56 (TTGFDWC), 58–61 (TGAC), and 62–65 (TYSC).

Post-translationally, contains DL-beta-methyllanthionine, when coepressed in E.coli with the flavecin synthetase FlvM2.

The protein localises to the secreted. In terms of biological role, lanthionine-containing peptide antibiotic (lantibiotic) only active on Gram-positive bacteria in synergy with Flvalpha.a. Is not active in absence of Flvalpha.a, which is encoded by the same operon than Flvbeta.b. The bactericidal activity of lantibiotics is based on depolarization of energized bacterial cytoplasmic membranes, initiated by the formation of aqueous transmembrane pores. This chain is Lantibiotic Flvbeta.b, found in Ruminococcus flavefaciens.